Here is a 1016-residue protein sequence, read N- to C-terminus: Nonsense-mediated mRNA decay factor SMG5 (1016 aa).

At serine 2 the chain carries N-acetylserine. Residues serine 2 and serine 423 each carry the phosphoserine modification. Disordered regions lie at residues 408–561 (NPVP…PSEA) and 594–637 (PTTN…RSCR). Residues 449–466 (KSRKFSRLSCLRRRRHPP) are compositionally biased toward basic residues. Positions 594–603 (PTTNPHTSAS) are enriched in polar residues. Over residues 619–628 (ASEEGSESEG) the composition is skewed to acidic residues. The stretch at 798 to 841 (QSEQESLLQQAQAQFRMAQEEARRNRLMRDMAQLRLQLEVSQLE) forms a coiled coil. Positions 872 to 995 (RQLATSGRFI…GPMQAALQAA (124 aa)) constitute a PINc domain.

Interacts with TERT, PPP2CA and SMG1. Part of a complex that contains SMG1, SMG5, SMG7, PPP2CA, a short isoform of UPF3A (isoform UPF3AS, but not isoform UPF3AL) and phosphorylated UPF1. Not detected in complexes that contain unphosphorylated UPF1. In terms of tissue distribution, ubiquitous.

The protein localises to the cytoplasm. It localises to the nucleus. Its function is as follows. Plays a role in nonsense-mediated mRNA decay. Does not have RNase activity by itself. Promotes dephosphorylation of UPF1. Together with SMG7 is thought to provide a link to the mRNA degradation machinery involving exonucleolytic pathways, and to serve as an adapter for UPF1 to protein phosphatase 2A (PP2A), thereby triggering UPF1 dephosphorylation. Necessary for TERT activity. The protein is Nonsense-mediated mRNA decay factor SMG5 of Homo sapiens (Human).